The following is a 180-amino-acid chain: MTDYQNDDDGFVSKSQRKRDMDALQDLGRELVDLSKDTLKKMQLPEDLLTAVLDYKRFTANGALRRQMQYIGKLMRDVDPEPIREYLKVLKGESSEHIAWQHLLERWREKLMADDKALSDFLAAFPEGDPQQLRTLMRNARKELQDNKPPKAYRQLFQEIKALIPEPGKPRLWQKDEDEE.

This sequence belongs to the DarP family.

It is found in the cytoplasm. Its function is as follows. Member of a network of 50S ribosomal subunit biogenesis factors which assembles along the 30S-50S interface, preventing incorrect 23S rRNA structures from forming. Promotes peptidyl transferase center (PTC) maturation. This is Dual-action ribosomal maturation protein DarP from Chromobacterium violaceum (strain ATCC 12472 / DSM 30191 / JCM 1249 / CCUG 213 / NBRC 12614 / NCIMB 9131 / NCTC 9757 / MK).